The chain runs to 409 residues: Elongation factor Tu, chloroplastic (409 aa).

The tr-type G domain occupies 10 to 214 (KPHINIGTIG…QVDSYIPTPT (205 aa)). Positions 19–26 (GHVDHGKT) are G1. 19–26 (GHVDHGKT) provides a ligand contact to GTP. Thr26 serves as a coordination point for Mg(2+). An N6-methyllysine modification is found at Lys57. Residues 60–64 (GITIN) form a G2 region. A G3 region spans residues 81–84 (DCPG). Residues 81-85 (DCPGH) and 136-139 (NKED) each bind GTP. A G4 region spans residues 136-139 (NKED). A G5 region spans residues 174 to 176 (SAL).

The protein belongs to the TRAFAC class translation factor GTPase superfamily. Classic translation factor GTPase family. EF-Tu/EF-1A subfamily.

The protein localises to the plastid. The protein resides in the chloroplast. The enzyme catalyses GTP + H2O = GDP + phosphate + H(+). Functionally, GTP hydrolase that promotes the GTP-dependent binding of aminoacyl-tRNA to the A-site of ribosomes during protein biosynthesis. The polypeptide is Elongation factor Tu, chloroplastic (tufA) (Euglena gracilis).